A 589-amino-acid chain; its full sequence is MEEKVSLKVRVQKLGTSLSNMVMPNIGAFIAWGVLTALFIADGYLPNEQLATVVGPMLTYLLPILIGYTGGYMIHGQRGAVVGSIATVGAITGSSVPMFIGAMVMGPLGGWTIKKFDEKFQEKIRPGFEMLVNNFSAGLVGFALLLLAFYAIGPVVSTLTGAVGNGVEAIVNARLLPMANIIIEPAKVLFLNNALNHGIFTPLGVEQVAQAGKSILFLLEANPGPGLGILLAYAVFGKGSAKSSSWGAMVIHFFGGIHEIYFPYVMMKPTLFLAAMAGGISGTFTFQLLDAGLKSPASPGSIIAIMATAPKGVWPHLNILLGVLVAAVVSFLIAALILHADKSTEDSLEAAQAATQAAKAQSKGQLVSTSVDAVVSTDSVEKIIFACDAGMGSSAMGASILRDKVKKAGLELPVSNQAISNLLDTPKTLIVTQEELTPRAKDKSPSAIHVSVDNFLASPRYDEIVASLTGASPIAEIEGDIPTSAPVDSQEIDLNHIDAVVVAYGKAQGTATMGCETIRAIFRNKNIRIPVSTAKISELGEFNSKNIMIVTTISLQAEVQQAAPNSQFLIVDSLVTTPEYDKMAARMYK.

The Cytoplasmic segment spans residues 1-25; the sequence is MEEKVSLKVRVQKLGTSLSNMVMPN. In terms of domain architecture, PTS EIIC type-2 spans 14-347; the sequence is LGTSLSNMVM…LHADKSTEDS (334 aa). A helical membrane pass occupies residues 26 to 47; sequence IGAFIAWGVLTALFIADGYLPN. The Extracellular segment spans residues 48–51; the sequence is EQLA. Residues 52-72 traverse the membrane as a helical segment; sequence TVVGPMLTYLLPILIGYTGGY. Topologically, residues 73-135 are cytoplasmic; sequence MIHGQRGAVV…PGFEMLVNNF (63 aa). Residues 136–157 form a helical membrane-spanning segment; that stretch reads SAGLVGFALLLLAFYAIGPVVS. Residues 158–166 are Extracellular-facing; the sequence is TLTGAVGNG. The chain crosses the membrane as a helical span at residues 167-187; that stretch reads VEAIVNARLLPMANIIIEPAK. Residues 188–274 are Cytoplasmic-facing; the sequence is VLFLNNALNH…VMMKPTLFLA (87 aa). The chain crosses the membrane as a helical span at residues 275 to 294; the sequence is AMAGGISGTFTFQLLDAGLK. Over 295–316 the chain is Extracellular; sequence SPASPGSIIAIMATAPKGVWPH. A helical membrane pass occupies residues 317–338; the sequence is LNILLGVLVAAVVSFLIAALIL. Residues 339 to 589 lie on the Cytoplasmic side of the membrane; the sequence is HADKSTEDSL…YDKMAARMYK (251 aa). A PTS EIIB type-2 domain is found at 381 to 476; that stretch reads EKIIFACDAG…SLTGASPIAE (96 aa). Cys-387 acts as the Phosphocysteine intermediate; for EIIB activity in catalysis. Phosphocysteine; by EIIA is present on Cys-387.

As to quaternary structure, homodimer.

It is found in the cell membrane. The enzyme catalyses D-mannitol(out) + N(pros)-phospho-L-histidyl-[protein] = D-mannitol 1-phosphate(in) + L-histidyl-[protein]. Its function is as follows. The phosphoenolpyruvate-dependent sugar phosphotransferase system (sugar PTS), a major carbohydrate active transport system, catalyzes the phosphorylation of incoming sugar substrates concomitantly with their translocation across the cell membrane. The enzyme II CmtAB PTS system is involved in D-mannitol transport. This chain is PTS system mannitol-specific EIICB component (mtlA), found in Streptococcus pneumoniae (strain ATCC BAA-255 / R6).